The sequence spans 278 residues: Energy-coupling factor transporter ATP-binding protein EcfA1 (278 aa).

In terms of domain architecture, ABC transporter spans 5-239; that stretch reads IRVQHLNYTY…GMELLRLGLD (235 aa). 39-46 provides a ligand contact to ATP; the sequence is GHNGSGKS. Glu-165 (proton acceptor) is an active-site residue.

It belongs to the ABC transporter superfamily. Energy-coupling factor EcfA family. In terms of assembly, forms a stable energy-coupling factor (ECF) transporter complex probably composed of 2 membrane-embedded substrate-binding proteins (S component), 2 ATP-binding proteins (A component) and 2 transmembrane proteins (T component). This complex interacts with a number of substrate-specific components, including FolT and ThiT for 5-formyltetrahydrofolate and thiamine respectively.

It is found in the cell membrane. ATP-binding (A) component of a common energy-coupling factor (ECF) ABC-transporter complex. Unlike classic ABC transporters this ECF transporter provides the energy necessary to transport a number of different substrates including 5-formyltetrahydrofolate and thiamine. Expression of the complex plus FolT or ThiT in Lactococcus lactis subsp. cremoris (strain NZ9000) allows 5-formyltetrahydrofolate or thiamine uptake respectively; 5-formyltetrahydrofolate or thiamine are not taken up in the absence of FolT/ThiT or the EcfA1A2T complex. Deenergized L.lactis subsp. cremoris (treated with 2-deoxyglucose) does not take up substrate. The sequence is that of Energy-coupling factor transporter ATP-binding protein EcfA1 from Lacticaseibacillus paracasei (strain ATCC 334 / BCRC 17002 / CCUG 31169 / CIP 107868 / KCTC 3260 / NRRL B-441) (Lactobacillus paracasei).